The following is a 308-amino-acid chain: tRNA dimethylallyltransferase (308 aa).

14–21 (GPTASGKT) is an ATP binding site. 16–21 (TASGKT) is a binding site for substrate. Interaction with substrate tRNA stretches follow at residues 39 to 42 (DSAL), 163 to 167 (QRLAR), and 244 to 249 (RCVGYR).

Belongs to the IPP transferase family. As to quaternary structure, monomer. Mg(2+) serves as cofactor.

The enzyme catalyses adenosine(37) in tRNA + dimethylallyl diphosphate = N(6)-dimethylallyladenosine(37) in tRNA + diphosphate. Its function is as follows. Catalyzes the transfer of a dimethylallyl group onto the adenine at position 37 in tRNAs that read codons beginning with uridine, leading to the formation of N6-(dimethylallyl)adenosine (i(6)A). The polypeptide is tRNA dimethylallyltransferase (Shewanella piezotolerans (strain WP3 / JCM 13877)).